Reading from the N-terminus, the 358-residue chain is Probable D-xylulose reductase A (358 aa).

Positions 47, 72, and 73 each coordinate Zn(2+). An NAD(+)-binding site is contributed by 182-187; it reads GAGPVG.

It belongs to the zinc-containing alcohol dehydrogenase family. Requires Zn(2+) as cofactor.

The catalysed reaction is xylitol + NAD(+) = D-xylulose + NADH + H(+). It participates in carbohydrate degradation; L-arabinose degradation via L-arabinitol; D-xylulose 5-phosphate from L-arabinose (fungal route): step 4/5. Its function is as follows. Xylitol dehydrogenase which catalyzes the conversion of xylitol to D-xylulose. Xylose is a major component of hemicelluloses such as xylan. Most fungi utilize D-xylose via three enzymatic reactions, xylose reductase (XR), xylitol dehydrogenase (XDH), and xylulokinase, to form xylulose 5-phosphate, which enters pentose phosphate pathway. The polypeptide is Probable D-xylulose reductase A (xdhA) (Aspergillus clavatus (strain ATCC 1007 / CBS 513.65 / DSM 816 / NCTC 3887 / NRRL 1 / QM 1276 / 107)).